Here is a 316-residue protein sequence, read N- to C-terminus: MAGELSIATELPTSPLAMEYVNDFDLMKFDVKKEPLGGRPDRAIRPCNRLQPTGSVSSTPISTPCSSVPSSPSFSPTEQKTHMDELYWMTNSYQQVNPEALNLTPEDAVEALIGPHQMPPQMQGYDSFRGHHHHHHNNHHHQNHHQYQGLPHEEMGLPHQHPHHHHHHHHHQPSPSPSGSSSSSQQLQNSHQQHQNSSAVEDRFSDDQLVSMSVRELNRHLRGFTKDDVIRLKQKRRTLKNRGYAQSCRFKRVQQKHHLENEKTQLIQQVEQLKLEVSRLARERDAYKIKCEKLANTTFREAGSTSDNPSSPEFFM.

Disordered regions lie at residues 40-78 (PDRAIRPCNRLQPTGSVSSTPISTPCSSVPSSPSFSPTE) and 116-204 (HQMP…EDRF). Over residues 55 to 77 (SVSSTPISTPCSSVPSSPSFSPT) the composition is skewed to low complexity. Composition is skewed to basic residues over residues 130–144 (GHHHHHHNNHHHQNH) and 160–172 (QHPHHHHHHHHHQ). A compositionally biased stretch (low complexity) spans 177-198 (PSGSSSSSQQLQNSHQQHQNSS). Residues 231–256 (RLKQKRRTLKNRGYAQSCRFKRVQQK) form a basic motif region. A bZIP domain is found at 231–294 (RLKQKRRTLK…DAYKIKCEKL (64 aa)). A leucine-zipper region spans residues 259-280 (LENEKTQLIQQVEQLKLEVSRL).

It belongs to the bZIP family. Maf subfamily. As to quaternary structure, homodimer or heterodimer with other bHLH-Zip transcription factors. Binds DNA as a homodimer or a heterodimer.

It is found in the nucleus. In terms of biological role, acts as a transcriptional activator or repressor. Implicated in the regulation of cell-type specific gene expression and play a role in inductive events during lens development. The polypeptide is Transcription factor MafB (mafb) (Xenopus tropicalis (Western clawed frog)).